The chain runs to 310 residues: Porphobilinogen deaminase (310 aa).

Residue cysteine 242 is modified to S-(dipyrrolylmethanemethyl)cysteine.

This sequence belongs to the HMBS family. Monomer. The cofactor is dipyrromethane.

It carries out the reaction 4 porphobilinogen + H2O = hydroxymethylbilane + 4 NH4(+). It participates in porphyrin-containing compound metabolism; protoporphyrin-IX biosynthesis; coproporphyrinogen-III from 5-aminolevulinate: step 2/4. Functionally, tetrapolymerization of the monopyrrole PBG into the hydroxymethylbilane pre-uroporphyrinogen in several discrete steps. The sequence is that of Porphobilinogen deaminase from Shewanella baltica (strain OS195).